The sequence spans 354 residues: Uroporphyrinogen decarboxylase (354 aa).

Substrate contacts are provided by residues 25–29, D75, Y152, T207, and H330; that span reads RQAGR.

Belongs to the uroporphyrinogen decarboxylase family. In terms of assembly, homodimer.

It is found in the cytoplasm. It catalyses the reaction uroporphyrinogen III + 4 H(+) = coproporphyrinogen III + 4 CO2. It participates in porphyrin-containing compound metabolism; protoporphyrin-IX biosynthesis; coproporphyrinogen-III from 5-aminolevulinate: step 4/4. Its function is as follows. Catalyzes the decarboxylation of four acetate groups of uroporphyrinogen-III to yield coproporphyrinogen-III. The chain is Uroporphyrinogen decarboxylase from Xanthomonas oryzae pv. oryzae (strain PXO99A).